Consider the following 503-residue polypeptide: Ribonuclease Y (503 aa).

A helical membrane pass occupies residues 2 to 22 (GIIIGLIIVSVALIISLCSLL). In terms of domain architecture, KH spans 193-253 (TTNLVKLPND…IRREIATKTL (61 aa)). The HD domain maps to 319–412 (VLLHSVEVAK…VAIADAISAS (94 aa)).

The protein belongs to the RNase Y family.

The protein localises to the cell membrane. Its function is as follows. Endoribonuclease that initiates mRNA decay. In Mesoplasma florum (strain ATCC 33453 / NBRC 100688 / NCTC 11704 / L1) (Acholeplasma florum), this protein is Ribonuclease Y.